Here is a 479-residue protein sequence, read N- to C-terminus: MSTKGKHPRADQGTDPFEEKLQRLKEAFNTGKTKTAKFRAEQLQSLGRFLQDNSKQLHDALDGDLGKSGFESDMSEIILCENEVDLALKNLQTWMKDEPVSTNLLTKLSTAFIRKEPFGLVLIIAPWNYPVNLMIIPLVGAIAAGNCVVLKPSEISKNTEKVLAELLPQYLDQSCFAVMLGGPEETGQLLEHKFDYIFFTGSPRVGKIVMTAAAKHLTPITLELGGKNPCYVDDNCDPQTVANRVAWFRYFNAGQTCVAPDYILCSQEMQEQLVPALQNAITRFYGDNPQTSPNLGRIINQKHFKRLQGLLGCGRVAIGGQSDEGERYIAPTVLVDVQETEPVMQEEIFGPILPLVTVRSLDEAIEFMNQREKPLALYAYSNNAEVIKQVLARTSSGGFCGNDGFMYMTLSSLPFGGVGSSGMGRYHGKFSFDTFSNQRACLLSCPGMEKLNGLRYPPYSPRRQQLLRWAIGSESCTLL.

Active-site residues include Glu223 and Cys257. A lipid anchor (S-geranylgeranyl cysteine) is attached at Cys476. The propeptide at 477–479 (TLL) is removed in mature form.

The protein belongs to the aldehyde dehydrogenase family. Geranylgeranylation is important for membrane localization and enzyme activity. As to expression, expressed in testis, kidney, small intestine, spleen, white adipose tissue, liver and lung.

It is found in the cell membrane. The enzyme catalyses an aldehyde + NAD(+) + H2O = a carboxylate + NADH + 2 H(+). It carries out the reaction hexadecanoate + NADH + 2 H(+) = hexadecanal + NAD(+) + H2O. The catalysed reaction is octanal + NAD(+) + H2O = octanoate + NADH + 2 H(+). Oxidizes medium and long chain aldehydes into non-toxic fatty acids. This chain is Aldehyde dehydrogenase family 3 member B3, found in Mus musculus (Mouse).